A 261-amino-acid chain; its full sequence is Mannose-specific lectin 2 (261 aa).

Residues 1 to 23 (MAKLLLFLLPAILGLLIPRSAVA) form the signal peptide. 2 consecutive Bulb-type lectin domains span residues 26–131 (TNYL…PWVP) and 145–252 (DNLL…SKRS). Residues 51 to 55 (QNDCN), Tyr-59, Trp-63, Gln-64, 170 to 174 (QGDCN), Tyr-178, and 182 to 185 (YGWQ) each bind beta-D-mannose. A Carbohydrate-binding motif 1 motif is present at residues 51–59 (QNDCNLVLY). 2 disulfides stabilise this stretch: Cys-54–Cys-74 and Cys-173–Cys-195. The short motif at 170–178 (QGDCNLVLY) is the Carbohydrate-binding motif 2 element.

In terms of assembly, forms heterotetramer of 2 chains 1 and 2 chains 2 arranged as a dimer of chain 1 and chain 2 heterodimers.

Its function is as follows. Mannose-specific lectin. Shows agglutinating activity towards erythrocytes from rabbit. This is Mannose-specific lectin 2 from Colocasia esculenta (Wild taro).